The following is a 981-amino-acid chain: Protein deadlock (981 aa).

Residues 1-60 are required for interaction with rhi/rhino; sequence MEKLDKIRMSQKLSCWQHILTTLGTSSKTEQEWNTFFKGFLESWRKPYCIQTSCDPSIPL. Disordered regions lie at residues 72–195, 274–307, 327–352, 375–446, 554–586, and 642–662; these read LQEN…ACAP, IMDKPKNKQQPQTPPPFLLNNEYTESSDDSDDQL, SRNEDCSPAPEKVKLKGERPAQNKKE, LRKS…PNNI, GLDDENVPEDEPRKEAKTAEQLPKPEPSTETLK, and LVHQPLAESNRNQRDEATAAR. Composition is skewed to polar residues over residues 104-113 and 150-160; these read PSKSHSTGST and NHTTSIFSKAQ. Basic and acidic residues predominate over residues 167 to 191; sequence KLSSTKKRPDTCAPTDDSRKNREPR. Residues 337 to 352 show a composition bias toward basic and acidic residues; it reads EKVKLKGERPAQNKKE. Residues 377-390 are compositionally biased toward basic residues; the sequence is KSVKKSAKQQKPRV. Positions 409 to 419 are enriched in basic and acidic residues; the sequence is TQDKQSTHEMI. Polar residues predominate over residues 422 to 446; that stretch reads QAKTISEASGQQTSQVQSSLSPNNI. Over residues 652 to 662 the composition is skewed to basic and acidic residues; sequence RNQRDEATAAR.

Component of the Rhino-Deadlock-Cutoff (RDC) complex, composed of rhi/rhino, del/deadlock and cuff/cutoff. Interacts (via N-terminus) with rhi/rhino (via C-terminus); this interaction is direct. Interacts (via C-terminus) with cuff/cutoff; this interaction is direct.

The protein resides in the nucleus. Its subcellular location is the cytoplasm. The protein localises to the cytoskeleton. It is found in the microtubule organizing center. It localises to the centrosome. The protein resides in the chromosome. In terms of biological role, developmental protein involved in oogenesis. Required for germline maintenance, stability of mitotic spindles, localization of patterning determinants, oocyte growth and fusome biogenesis in males and females. Also required for dorso-ventral and antero-posterior patterning of oocyte and eggshell. May be involved in microtubule function during oogenesis. Part of a rhi-dependent transcription machinery that enables the generation of piRNA precursors from heterochromatin while maintaining the suppression of transposon-encoded promoters and enhancers. Component of the RDC complex (rhi, del and cuff) which binds to repressive H3K9me3 marks in the piRNA clusters. RDC promotes the bidirectional transcription of piRNA clusters at these sites by interacting with Moonshiner which forms a complex with the transcription initiation factors TfIIA-S and Trf2. This mechanism allows transcription to occur in piRNA clusters despite the lack of proper promoter elements and in the presence of the repressive H3K9me3 mark. As part of the RDC complex, involved in suppression of splicing. This chain is Protein deadlock (del), found in Drosophila melanogaster (Fruit fly).